We begin with the raw amino-acid sequence, 151 residues long: Ribonuclease H (151 aa).

The region spanning 1 to 141 (MKNVIIYTDG…ADALANRGID (141 aa)) is the RNase H type-1 domain. Asp9, Glu47, Asp69, and Asp133 together coordinate Mg(2+).

The protein belongs to the RNase H family. In terms of assembly, monomer. It depends on Mg(2+) as a cofactor.

It localises to the cytoplasm. It catalyses the reaction Endonucleolytic cleavage to 5'-phosphomonoester.. Functionally, endonuclease that specifically degrades the RNA of RNA-DNA hybrids. In Alcanivorax borkumensis (strain ATCC 700651 / DSM 11573 / NCIMB 13689 / SK2), this protein is Ribonuclease H.